We begin with the raw amino-acid sequence, 328 residues long: Peroxidase 59 (328 aa).

The first 28 residues, 1–28 (MKTQTKVMGGHVLLTVFTLCMLCSGVRA), serve as a signal peptide directing secretion. Residue glutamine 29 is modified to Pyrrolidone carboxylic acid. Disulfide bonds link cysteine 39–cysteine 116, cysteine 72–cysteine 77, cysteine 122–cysteine 323, and cysteine 200–cysteine 232. The Proton acceptor role is filled by histidine 70. Aspartate 71, valine 74, glycine 76, aspartate 78, and serine 80 together coordinate Ca(2+). Proline 163 is a binding site for substrate. Residue asparagine 182 is glycosylated (N-linked (GlcNAc...) asparagine). Heme b is bound at residue histidine 193. A Ca(2+)-binding site is contributed by threonine 194. 2 N-linked (GlcNAc...) asparagine glycosylation sites follow: asparagine 209 and asparagine 239. Aspartate 245, threonine 248, threonine 251, and aspartate 253 together coordinate Ca(2+). Asparagine 281 and asparagine 310 each carry an N-linked (GlcNAc...) asparagine glycan.

It belongs to the peroxidase family. Classical plant (class III) peroxidase subfamily. Heme b serves as cofactor. The cofactor is Ca(2+). Slightly expressed in roots.

The protein resides in the secreted. It carries out the reaction 2 a phenolic donor + H2O2 = 2 a phenolic radical donor + 2 H2O. In terms of biological role, removal of H(2)O(2), oxidation of toxic reductants, biosynthesis and degradation of lignin, suberization, auxin catabolism, response to environmental stresses such as wounding, pathogen attack and oxidative stress. These functions might be dependent on each isozyme/isoform in each plant tissue. The protein is Peroxidase 59 (PER59) of Arabidopsis thaliana (Mouse-ear cress).